The sequence spans 460 residues: Cobyrinate a,c-diamide synthase (460 aa).

A GATase cobBQ-type domain is found at 248–440; it reads KIAVARDAAF…THFHFGSSTK (193 aa). The active-site Nucleophile is cysteine 331.

The protein belongs to the CobB/CbiA family. Requires Mg(2+) as cofactor.

The enzyme catalyses cob(II)yrinate + 2 L-glutamine + 2 ATP + 2 H2O = cob(II)yrinate a,c diamide + 2 L-glutamate + 2 ADP + 2 phosphate + 2 H(+). It participates in cofactor biosynthesis; adenosylcobalamin biosynthesis; cob(II)yrinate a,c-diamide from sirohydrochlorin (anaerobic route): step 10/10. In terms of biological role, catalyzes the ATP-dependent amidation of the two carboxylate groups at positions a and c of cobyrinate, using either L-glutamine or ammonia as the nitrogen source. In Priestia megaterium (Bacillus megaterium), this protein is Cobyrinate a,c-diamide synthase.